A 1057-amino-acid chain; its full sequence is Probable E3 ubiquitin-protein ligase HERC4 (1057 aa).

7 RCC1 repeats span residues 1–51 (MLCW…FVLD), 52–101 (DGTV…ALND), 102–154 (KGQV…ALSK), 156–207 (SEVF…VLTL), 208–259 (SGAI…ALTK), 261–311 (GGVF…AFVP), and 313–366 (SGRI…CVKR). One can recognise an HECT domain in the interval 730–1057 (KNIDYKKPLK…IDHNEGFSLI (328 aa)). Cys1025 serves as the catalytic Glycyl thioester intermediate.

Ubiquitously expressed, highest expression is found in testis during spermiogenesis. It is specifically found in spermatogonia, spermatocytes, and spermatids with little or no expression detectable in the spermatozoa, or interstitial cells.

It is found in the cytoplasm. It localises to the cytosol. It catalyses the reaction S-ubiquitinyl-[E2 ubiquitin-conjugating enzyme]-L-cysteine + [acceptor protein]-L-lysine = [E2 ubiquitin-conjugating enzyme]-L-cysteine + N(6)-ubiquitinyl-[acceptor protein]-L-lysine.. It participates in protein modification; protein ubiquitination. Its function is as follows. Probable E3 ubiquitin-protein ligase involved in either protein trafficking or in the distribution of cellular structures. Required for spermatozoon maturation and fertility, and for the removal of the cytoplasmic droplet of the spermatozoon. E3 ubiquitin-protein ligases accept ubiquitin from an E2 ubiquitin-conjugating enzyme in the form of a thioester and then directly transfer it to targeted substrates. This is Probable E3 ubiquitin-protein ligase HERC4 (Herc4) from Mus musculus (Mouse).